Reading from the N-terminus, the 362-residue chain is Histidine biosynthesis bifunctional protein HisB (362 aa).

Positions 1–173 (MQPTLFIDRD…TVTNCGKRPP (173 aa)) are histidinol-phosphatase. D8 functions as the Nucleophile in the catalytic mechanism. Mg(2+) contacts are provided by D8 and D10. Catalysis depends on D10, which acts as the Proton donor. Residues C91, H93, C99, and C101 each contribute to the Zn(2+) site. D128 contributes to the Mg(2+) binding site. The imidazoleglycerol-phosphate dehydratase stretch occupies residues 174–362 (RFAEVIRQTK…NEMPSSKGVL (189 aa)).

This sequence in the N-terminal section; belongs to the histidinol-phosphatase family. It in the C-terminal section; belongs to the imidazoleglycerol-phosphate dehydratase family. The cofactor is Mg(2+). Zn(2+) serves as cofactor.

The protein resides in the cytoplasm. It carries out the reaction D-erythro-1-(imidazol-4-yl)glycerol 3-phosphate = 3-(imidazol-4-yl)-2-oxopropyl phosphate + H2O. It catalyses the reaction L-histidinol phosphate + H2O = L-histidinol + phosphate. Its pathway is amino-acid biosynthesis; L-histidine biosynthesis; L-histidine from 5-phospho-alpha-D-ribose 1-diphosphate: step 6/9. The protein operates within amino-acid biosynthesis; L-histidine biosynthesis; L-histidine from 5-phospho-alpha-D-ribose 1-diphosphate: step 8/9. The chain is Histidine biosynthesis bifunctional protein HisB from Haemophilus influenzae (strain 86-028NP).